A 201-amino-acid chain; its full sequence is UPF0301 protein RHE_CH00966 (201 aa).

This sequence belongs to the UPF0301 (AlgH) family.

The chain is UPF0301 protein RHE_CH00966 from Rhizobium etli (strain ATCC 51251 / DSM 11541 / JCM 21823 / NBRC 15573 / CFN 42).